Here is a 337-residue protein sequence, read N- to C-terminus: Adenine deaminase (337 aa).

Positions 17, 19, and 197 each coordinate Zn(2+). E200 acts as the Proton donor in catalysis. Residue D278 participates in Zn(2+) binding. D279 serves as a coordination point for substrate.

Belongs to the metallo-dependent hydrolases superfamily. Adenosine and AMP deaminases family. Adenine deaminase type 2 subfamily. It depends on Zn(2+) as a cofactor.

The enzyme catalyses adenine + H2O + H(+) = hypoxanthine + NH4(+). Functionally, catalyzes the hydrolytic deamination of adenine to hypoxanthine. Plays an important role in the purine salvage pathway and in nitrogen catabolism. The sequence is that of Adenine deaminase from Zymomonas mobilis subsp. mobilis (strain ATCC 31821 / ZM4 / CP4).